An 85-amino-acid polypeptide reads, in one-letter code: Cell division topological specificity factor (85 aa).

It belongs to the MinE family.

Its function is as follows. Prevents the cell division inhibition by proteins MinC and MinD at internal division sites while permitting inhibition at polar sites. This ensures cell division at the proper site by restricting the formation of a division septum at the midpoint of the long axis of the cell. The chain is Cell division topological specificity factor from Xanthomonas euvesicatoria pv. vesicatoria (strain 85-10) (Xanthomonas campestris pv. vesicatoria).